A 370-amino-acid polypeptide reads, in one-letter code: 4-hydroxy-3-methylbut-2-en-1-yl diphosphate synthase (flavodoxin) (370 aa).

Positions 270, 273, 305, and 312 each coordinate [4Fe-4S] cluster.

The protein belongs to the IspG family. [4Fe-4S] cluster is required as a cofactor.

It carries out the reaction (2E)-4-hydroxy-3-methylbut-2-enyl diphosphate + oxidized [flavodoxin] + H2O + 2 H(+) = 2-C-methyl-D-erythritol 2,4-cyclic diphosphate + reduced [flavodoxin]. It participates in isoprenoid biosynthesis; isopentenyl diphosphate biosynthesis via DXP pathway; isopentenyl diphosphate from 1-deoxy-D-xylulose 5-phosphate: step 5/6. Functionally, converts 2C-methyl-D-erythritol 2,4-cyclodiphosphate (ME-2,4cPP) into 1-hydroxy-2-methyl-2-(E)-butenyl 4-diphosphate. In Ectopseudomonas mendocina (strain ymp) (Pseudomonas mendocina), this protein is 4-hydroxy-3-methylbut-2-en-1-yl diphosphate synthase (flavodoxin).